An 84-amino-acid polypeptide reads, in one-letter code: Magnetosome protein MamR (84 aa).

The protein belongs to the magnetosome MamR family.

It is found in the magnetosome. Its function is as follows. May play a role in controlling magnetite number and size. Coexpression of mamLQRBIEMO in a deletion of the 17 gene mamAB operon restores magnetosome vesicle formation but not magnetite biosynthesis. This chain is Magnetosome protein MamR, found in Magnetospirillum gryphiswaldense (strain DSM 6361 / JCM 21280 / NBRC 15271 / MSR-1).